The sequence spans 284 residues: Diaminopimelate epimerase (284 aa).

Substrate contacts are provided by asparagine 20, glutamine 53, and asparagine 73. Cysteine 82 functions as the Proton donor in the catalytic mechanism. Residues 83 to 84, asparagine 167, asparagine 200, and 218 to 219 each bind substrate; these read GN and ER. The active-site Proton acceptor is the cysteine 227. 228-229 is a substrate binding site; it reads GS.

It belongs to the diaminopimelate epimerase family. Homodimer.

It localises to the cytoplasm. It catalyses the reaction (2S,6S)-2,6-diaminopimelate = meso-2,6-diaminopimelate. Its pathway is amino-acid biosynthesis; L-lysine biosynthesis via DAP pathway; DL-2,6-diaminopimelate from LL-2,6-diaminopimelate: step 1/1. Functionally, catalyzes the stereoinversion of LL-2,6-diaminopimelate (L,L-DAP) to meso-diaminopimelate (meso-DAP), a precursor of L-lysine and an essential component of the bacterial peptidoglycan. This Xylella fastidiosa (strain M12) protein is Diaminopimelate epimerase.